The sequence spans 514 residues: RNA polymerase I-specific transcription initiation factor RRN7 (514 aa).

The RRN7-type zinc-finger motif lies at 3–36; sequence TFIRGPICGTDNCPSRLWRIIDGRRTCQYGHVME. Zn(2+) is bound by residues Cys10, Cys15, Cys29, and His33. A B-reader region spans residues 37 to 66; it reads GDVEFNDDEDDLNGLGAGVITRRLNLTTNA. Residues 67–101 form a B-linker region; it reads TGSFQSSQLTNSQLLQQQQRQSHKKFKKLIGHEAK. Residues 102–210 are N-terminal cyclin fold; sequence LLFLKSFQFI…KSWRIQLPNY (109 aa). Residues 211–320 form a C-terminal cyclin fold region; the sequence is YVSILEGSIS…MLTINWMLSF (110 aa).

The protein belongs to the RRN7/TAF1B family. Component of the core factor (CF) complex, which consists of RRN6, RRN7 and RRN11. The CF heterotrimer may further dimerize to form a hexamer. RRN7 interacts with RRN6, RRN11, SPT15 and RRN9.

The protein localises to the nucleus. Its subcellular location is the nucleolus. Component of RNA polymerase I core factor complex (CF) that acts as a SUA7/TFIIB-like factor and plays a key role in multiple steps during transcription initiation such as pre-initiation complex (PIC) assembly and postpolymerase recruitment events in polymerase I (Pol I) transcription. Binds rDNA promoters and plays a role in Pol I recruitment. After binding of UAF (upstream activation factor) to an upstream element of the promoter, CF is recruited in a SPT15/TBP-dependent manner to form a pre-initiation complex. The sequence is that of RNA polymerase I-specific transcription initiation factor RRN7 (RRN7) from Saccharomyces cerevisiae (strain ATCC 204508 / S288c) (Baker's yeast).